The chain runs to 28 residues: Cyclotide ltri-A (28 aa).

The cyclopeptide (Gly-Asn) cross-link spans G1 to N28. 3 disulfide bridges follow: C4/C18, C8/C20, and C13/C25.

Belongs to the cyclotide family. Bracelet subfamily. In terms of processing, this is a cyclic peptide.

In terms of biological role, probably participates in a plant defense mechanism. This Leonia triandra protein is Cyclotide ltri-A.